A 449-amino-acid chain; its full sequence is MTQNPQWLWQEVLTKLEQQLSRPTYETWIQPTAIQQWREDEIVLCAPNAFVLNHIQKYYGALITETIAELLQQPVKVRLTSPEGNTLAATQSFYSSRSGQSTRPGKKTPELNSKYTFSRFVVGPTNRMAHAAALAVAESPGRDFNPLVLCGGVGLGKTHLMQAIGHYRLDTQPDAKIFYVSTEQFTNDLIVAIRKDSLQTFREHYRTADILLVDDIQFIEGKEYTQEEFFYTFNTLHEAGKQIVLASDRPPHQIPGLQQRLSSRFSMGLIADIQPPDLETRMAILQKKAEAENLNLSRSVIEYIATHYTANIRELEGALLRAVTHIAISGLPMTVENLAPILNPTVEYAPAAPDVILQIAAEATGVSIEDLKGASRRREISTARQIAMYLMRQHTDLSLPRIGELFGGKDHTTVMYSCDKIGQLLTKNQKISQLVSQISDRINHHHQNL.

The tract at residues 1-73 (MTQNPQWLWQ…TETIAELLQQ (73 aa)) is domain I, interacts with DnaA modulators. Residues 73–109 (QPVKVRLTSPEGNTLAATQSFYSSRSGQSTRPGKKTP) are domain II. Over residues 90–103 (TQSFYSSRSGQSTR) the composition is skewed to polar residues. Residues 90 to 110 (TQSFYSSRSGQSTRPGKKTPE) are disordered. The segment at 110-326 (ELNSKYTFSR…GALLRAVTHI (217 aa)) is domain III, AAA+ region. The ATP site is built by glycine 154, glycine 156, lysine 157, and threonine 158. The segment at 327 to 449 (AISGLPMTVE…DRINHHHQNL (123 aa)) is domain IV, binds dsDNA.

Belongs to the DnaA family. In terms of assembly, oligomerizes as a right-handed, spiral filament on DNA at oriC.

It is found in the cytoplasm. In terms of biological role, plays an essential role in the initiation and regulation of chromosomal replication. ATP-DnaA binds to the origin of replication (oriC) to initiate formation of the DNA replication initiation complex once per cell cycle. Binds the DnaA box (a 9 base pair repeat at the origin) and separates the double-stranded (ds)DNA. Forms a right-handed helical filament on oriC DNA; dsDNA binds to the exterior of the filament while single-stranded (ss)DNA is stabiized in the filament's interior. The ATP-DnaA-oriC complex binds and stabilizes one strand of the AT-rich DNA unwinding element (DUE), permitting loading of DNA polymerase. After initiation quickly degrades to an ADP-DnaA complex that is not apt for DNA replication. Binds acidic phospholipids. This is Chromosomal replication initiator protein DnaA from Picosynechococcus sp. (strain ATCC 27264 / PCC 7002 / PR-6) (Agmenellum quadruplicatum).